The following is a 46-amino-acid chain: ALPCRCEGKTEYGDKWIFHGGCPNDYGYNDRCFMKPGSVCCYPKYE.

3 cysteine pairs are disulfide-bonded: cysteine 4-cysteine 40, cysteine 6-cysteine 32, and cysteine 22-cysteine 41.

This sequence belongs to the sea anemone type 3 (BDS) potassium channel toxin family.

The protein localises to the secreted. It localises to the nematocyst. Its function is as follows. Neurotoxin that induces paralysis (but not death) to U.thayeri crabs. Partially and reversibly inhibits glutamate-evoked peak currents (IC(50)=4.7 uM) but not voltage-gated potassium channel currents in cultured isolated neurons from the land snail H.aspersa. Weakly inhibits voltage-gated potassium peak currents (IC(50)=6.4 uM) and steady-state currents (IC(50)=8.2 uM) in rat dorsal root ganglion (DRG) neurons. Weakly inhibits voltage-gated sodium currents in rat DRG neurons (IC(50)=0.9 uM). The polypeptide is Toxin PhcrTx2 (Phymanthus crucifer (Red beaded anemone)).